Reading from the N-terminus, the 78-residue chain is Myrmicitoxin-Ta2a (78 aa).

Residues 1 to 26 (MKLSFLSLALAIIFVTVLIYAPQAEA) form the signal peptide. A propeptide spanning residues 27–56 (KALADAVADADADADAAADAVADALADADA) is cleaved from the precursor. Lysine 77 is subject to Lysine amide.

Belongs to the formicidae venom precursor-01 superfamily. As to expression, expressed by the venom gland.

The protein localises to the secreted. Functionally, peptide with toxicity towards insects that may also act as antimicrobial peptide. Causes calcium influx in F11 cells (EC(50)=5.8 nM), possibly by modulating sodium channels (Nav). In vivo, is lethal to insects, but does not show toxicity to vertebrates. Intraplantar injection into mice does not induce spontaneous nocifensive behaviors up to a dose of 200 pmol. The sequence is that of Myrmicitoxin-Ta2a from Tetramorium africanum (Fierce ant).